The primary structure comprises 999 residues: Caspase recruitment domain-containing protein 14 (999 aa).

One can recognise a CARD domain in the interval 15–107; the sequence is DEEMLWDMLE…DVYTLVTGLQ (93 aa). A coiled-coil region spans residues 125-411; the sequence is TECLAGAISS…QLRRLQAEAP (287 aa). A maintains the protein in an inactive state region spans residues 409 to 565; that stretch reads EAPGGPKQEA…RRPARKILSQ (157 aa). Ser-541 carries the phosphoserine modification. The region spanning 572–655 is the PDZ domain; it reads QGDALLEQIG…SCYLSVKINT (84 aa). The Guanylate kinase-like domain occupies 803-986; it reads SESCFTLAPY…LLSCVRLAIA (184 aa).

Interacts (via CARD domain) with BCL10 (via CARD domain). Forms a complex with MALT1 and BCL10; resulting in the formation of a CBM (CARD14-BLC10-MALT1) complex. Interacts with TRAF2, TRAF3 and TRAF6.

It is found in the cytoplasm. Functionally, acts as a scaffolding protein that can activate the inflammatory transcription factor NF-kappa-B and p38/JNK MAP kinase signaling pathways. Forms a signaling complex with BCL10 and MALT1, and activates MALT1 proteolytic activity and inflammatory gene expression. MALT1 is indispensable for CARD14-induced activation of NF-kappa-B and p38/JNK MAP kinases. May play a role in signaling mediated by TRAF2, TRAF3 and TRAF6 and protects cells against apoptosis. This is Caspase recruitment domain-containing protein 14 (Card14) from Mus musculus (Mouse).